A 67-amino-acid chain; its full sequence is Small ribosomal subunit protein eS17 (67 aa).

It belongs to the eukaryotic ribosomal protein eS17 family.

The protein is Small ribosomal subunit protein eS17 of Pyrococcus horikoshii (strain ATCC 700860 / DSM 12428 / JCM 9974 / NBRC 100139 / OT-3).